Reading from the N-terminus, the 304-residue chain is N-acetyllactosaminide alpha-2,3-sialyltransferase (304 aa).

CMP-N-acetyl-beta-neuraminate contacts are provided by residues 221 to 225, 242 to 243, and 262 to 263; these read FPHPA, FE, and SS. Residue His223 is the Proton donor of the active site.

The protein belongs to the glycosyltransferase 52 family.

It carries out the reaction a beta-D-galactosyl-(1-&gt;4)-N-acetyl-beta-D-glucosaminyl derivative + CMP-N-acetyl-beta-neuraminate = an N-acetyl-alpha-neuraminyl-(2-&gt;3)-beta-D-galactosyl-(1-&gt;4)-N-acetyl-beta-D-glucosaminyl derivative + CMP + H(+). Its pathway is bacterial outer membrane biogenesis; lipooligosaccharide biosynthesis. In terms of biological role, catalyzes the transfer of sialic acid from the substrate CMP-N-acetylneuraminate to the terminal galactose residue of the N-acetyllactosamine moiety of surface lipooligosaccharide (LOS). Thus, functions in the sialylation of LOS, which plays a role in the evasion of the host immune response. This is N-acetyllactosaminide alpha-2,3-sialyltransferase from Haemophilus influenzae (strain ATCC 51907 / DSM 11121 / KW20 / Rd).